The following is a 232-amino-acid chain: Glycerol-3-phosphate acyltransferase (232 aa).

6 helical membrane passes run 4 to 24, 56 to 76, 90 to 110, 124 to 144, 152 to 172, and 191 to 211; these read FLAI…IIAG, VVTL…VGFF, IALS…TVFA, MLIG…LLAV, VGSI…KYVF, and SLDY…IYTH.

Belongs to the PlsY family. In terms of assembly, probably interacts with PlsX.

It is found in the cell inner membrane. It carries out the reaction an acyl phosphate + sn-glycerol 3-phosphate = a 1-acyl-sn-glycero-3-phosphate + phosphate. The protein operates within lipid metabolism; phospholipid metabolism. Its function is as follows. Catalyzes the transfer of an acyl group from acyl-phosphate (acyl-PO(4)) to glycerol-3-phosphate (G3P) to form lysophosphatidic acid (LPA). This enzyme utilizes acyl-phosphate as fatty acyl donor, but not acyl-CoA or acyl-ACP. The chain is Glycerol-3-phosphate acyltransferase from Chlorobaculum tepidum (strain ATCC 49652 / DSM 12025 / NBRC 103806 / TLS) (Chlorobium tepidum).